A 242-amino-acid chain; its full sequence is Orotidine 5'-phosphate decarboxylase (242 aa).

Substrate contacts are provided by residues Asp-16, Lys-37, 64-73 (DLKFHDIPNT), Thr-128, Arg-190, Gln-199, Gly-219, and Arg-220. The active-site Proton donor is the Lys-66.

It belongs to the OMP decarboxylase family. Type 1 subfamily. Homodimer.

The catalysed reaction is orotidine 5'-phosphate + H(+) = UMP + CO2. It functions in the pathway pyrimidine metabolism; UMP biosynthesis via de novo pathway; UMP from orotate: step 2/2. Catalyzes the decarboxylation of orotidine 5'-monophosphate (OMP) to uridine 5'-monophosphate (UMP). In Prochlorococcus marinus (strain MIT 9215), this protein is Orotidine 5'-phosphate decarboxylase.